Consider the following 1342-residue polypeptide: DNA-directed RNA polymerase subunit beta (1342 aa).

Belongs to the RNA polymerase beta chain family. The RNAP catalytic core consists of 2 alpha, 1 beta, 1 beta' and 1 omega subunit. When a sigma factor is associated with the core the holoenzyme is formed, which can initiate transcription.

It carries out the reaction RNA(n) + a ribonucleoside 5'-triphosphate = RNA(n+1) + diphosphate. Functionally, DNA-dependent RNA polymerase catalyzes the transcription of DNA into RNA using the four ribonucleoside triphosphates as substrates. The chain is DNA-directed RNA polymerase subunit beta from Yersinia enterocolitica serotype O:8 / biotype 1B (strain NCTC 13174 / 8081).